A 310-amino-acid polypeptide reads, in one-letter code: Protoheme IX farnesyltransferase (310 aa).

Helical transmembrane passes span 21 to 43 (LLKPRVMSLVVFTALVGLLVAPV), 48 to 70 (MIALTGILFIALGAGASGALNMW), 95 to 115 (GEALGIGLALSGIAVVMLGLA), 118 to 138 (LFAAGLLAFTIFFYAVVYSMW), 147 to 167 (IVIGGAAGAFPPMIGWAVATG), 174 to 194 (LFMFALIFMWTPPHFWSLALF), 220 to 240 (VLVYSLLLAPLAVAGAFTGIG), 243 to 263 (LYLATALALNGWLLVGAVRIW), and 289 to 309 (LFLHFGAILAEAALKPYGLGG).

This sequence belongs to the UbiA prenyltransferase family. Protoheme IX farnesyltransferase subfamily. In terms of assembly, interacts with CtaA.

Its subcellular location is the cell inner membrane. It carries out the reaction heme b + (2E,6E)-farnesyl diphosphate + H2O = Fe(II)-heme o + diphosphate. It functions in the pathway porphyrin-containing compound metabolism; heme O biosynthesis; heme O from protoheme: step 1/1. In terms of biological role, converts heme B (protoheme IX) to heme O by substitution of the vinyl group on carbon 2 of heme B porphyrin ring with a hydroxyethyl farnesyl side group. This Cereibacter sphaeroides (strain KD131 / KCTC 12085) (Rhodobacter sphaeroides) protein is Protoheme IX farnesyltransferase.